The primary structure comprises 362 residues: Cobalt-precorrin-5B C(1)-methyltransferase (362 aa).

Belongs to the CbiD family.

It carries out the reaction Co-precorrin-5B + S-adenosyl-L-methionine = Co-precorrin-6A + S-adenosyl-L-homocysteine. It functions in the pathway cofactor biosynthesis; adenosylcobalamin biosynthesis; cob(II)yrinate a,c-diamide from sirohydrochlorin (anaerobic route): step 6/10. Catalyzes the methylation of C-1 in cobalt-precorrin-5B to form cobalt-precorrin-6A. The chain is Cobalt-precorrin-5B C(1)-methyltransferase from Geotalea daltonii (strain DSM 22248 / JCM 15807 / FRC-32) (Geobacter daltonii).